We begin with the raw amino-acid sequence, 335 residues long: Pyridoxal 5'-phosphate synthase subunit PdxS (335 aa).

Asp-30 contacts D-ribose 5-phosphate. The active-site Schiff-base intermediate with D-ribose 5-phosphate is Lys-87. Gly-159 is a binding site for D-ribose 5-phosphate. Arg-171 provides a ligand contact to D-glyceraldehyde 3-phosphate. D-ribose 5-phosphate is bound by residues Gly-257 and 278–279 (GS).

This sequence belongs to the PdxS/SNZ family. As to quaternary structure, in the presence of PdxT, forms a dodecamer of heterodimers.

The catalysed reaction is aldehydo-D-ribose 5-phosphate + D-glyceraldehyde 3-phosphate + L-glutamine = pyridoxal 5'-phosphate + L-glutamate + phosphate + 3 H2O + H(+). It functions in the pathway cofactor biosynthesis; pyridoxal 5'-phosphate biosynthesis. Its function is as follows. Catalyzes the formation of pyridoxal 5'-phosphate from ribose 5-phosphate (RBP), glyceraldehyde 3-phosphate (G3P) and ammonia. The ammonia is provided by the PdxT subunit. Can also use ribulose 5-phosphate and dihydroxyacetone phosphate as substrates, resulting from enzyme-catalyzed isomerization of RBP and G3P, respectively. In Thermococcus kodakarensis (strain ATCC BAA-918 / JCM 12380 / KOD1) (Pyrococcus kodakaraensis (strain KOD1)), this protein is Pyridoxal 5'-phosphate synthase subunit PdxS.